The chain runs to 123 residues: Large ribosomal subunit protein bL19 (123 aa).

This sequence belongs to the bacterial ribosomal protein bL19 family.

In terms of biological role, this protein is located at the 30S-50S ribosomal subunit interface and may play a role in the structure and function of the aminoacyl-tRNA binding site. The sequence is that of Large ribosomal subunit protein bL19 from Ureaplasma urealyticum serovar 10 (strain ATCC 33699 / Western).